We begin with the raw amino-acid sequence, 181 residues long: Large ribosomal subunit protein uL16 (181 aa).

The protein belongs to the universal ribosomal protein uL16 family. Part of the 50S ribosomal subunit.

In Pyrococcus furiosus (strain ATCC 43587 / DSM 3638 / JCM 8422 / Vc1), this protein is Large ribosomal subunit protein uL16.